Here is a 178-residue protein sequence, read N- to C-terminus: Thioredoxin F1, chloroplastic (178 aa).

The segment at 1–22 (MPLSLRLSPSPTALSPTTGGFG) is disordered. A chloroplast-targeting transit peptide spans 1 to 57 (MPLSLRLSPSPTALSPTTGGFGPSRKQCRIPYSGVPTTKIGFCSLDSRKRGDSSVVR). The span at 7–18 (LSPSPTALSPTT) shows a compositional bias: polar residues. The region spanning 58–174 (CSLETVNVSV…LVAAIETARS (117 aa)) is the Thioredoxin domain. Catalysis depends on nucleophile residues C99 and C102. A disulfide bond links C99 and C102. Residue C126 is modified to S-glutathionyl cysteine; transient.

This sequence belongs to the thioredoxin family. Plant F-type subfamily. Glutathionylation at Cys-126 decreases its ability to be reduced by ferredoxin-thioredoxin reductase and reduces its efficiency in activating target chloroplastic enzymes.

The protein resides in the plastid. Its subcellular location is the chloroplast stroma. Functionally, thiol-disulfide oxidoreductase involved in the redox regulation of enzymes of both reductive pentose phosphate pathway (Calvin-Benson cycle) and oxidative pentose phosphate pathway. Under light or reducing conditions, activates in chloroplast the glyceraldehyde-3-phosphate dehydrogenase, the phosphoribulokinase and the fructose-1,6-bisphosphate phosphatase, and inhibits the glucose-6-phosphate dehydrogenase. This chain is Thioredoxin F1, chloroplastic, found in Arabidopsis thaliana (Mouse-ear cress).